The following is a 663-amino-acid chain: Polyunsaturated fatty acid lipoxygenase ALOX15 (663 aa).

The PLAT domain occupies 2–115 (GVYRIRVSTG…ILSLPEGTGC (114 aa)). The 548-residue stretch at 116–663 (TVVEDSQGLF…PSMVENSVAI (548 aa)) folds into the Lipoxygenase domain. At serine 149 the chain carries Phosphoserine. Residues histidine 361, histidine 366, histidine 541, histidine 545, and isoleucine 663 each contribute to the Fe cation site.

Belongs to the lipoxygenase family. In terms of assembly, interacts with PEBP1; in response to IL13/interleukin-13, prevents the interaction of PEBP1 with RAF1 to activate the ERK signaling cascade. Requires Fe cation as cofactor. Detected in leukocytes, lung and aorta.

It is found in the cytoplasm. Its subcellular location is the cytosol. The protein resides in the cell membrane. It localises to the lipid droplet. It carries out the reaction (5Z,8Z,11Z,14Z)-eicosatetraenoate + O2 = (12S)-hydroperoxy-(5Z,8Z,10E,14Z)-eicosatetraenoate. The catalysed reaction is (5Z,8Z,11Z,14Z)-eicosatetraenoate + O2 = (15S)-hydroperoxy-(5Z,8Z,11Z,13E)-eicosatetraenoate. The enzyme catalyses (9Z,12Z)-octadecadienoate + O2 = (13S)-hydroperoxy-(9Z,11E)-octadecadienoate. It catalyses the reaction (12S)-hydroperoxy-(5Z,8Z,10E,14Z)-eicosatetraenoate = (8S)-hydroxy-(11S,12S)-epoxy-(5Z,9E,14Z)-eicosatrienoate. It carries out the reaction (5Z,8Z,11Z,14Z)-eicosatetraenoate + 2 O2 = (14R,15S)-dihydroperoxy-(5Z,8Z,10E,12E)-eicosatetraenoate. The catalysed reaction is (5Z,8Z,11Z,14Z)-eicosatetraenoate + 2 O2 = (8S,15S)-dihydroperoxy-(5Z,9E,11Z,13E)-eicosatetraenoate. The enzyme catalyses (14S,15R)-epoxy-(5Z,8Z,11Z)-eicosatrienoate + O2 = (8S)-hydroperoxy-(14S,15R)-epoxy-(5Z,9E,11Z)-eicosatrienoate. It catalyses the reaction (14S,15R)-epoxy-(5Z,8Z,11Z)-eicosatrienoate + O2 = (12S)-hydroperoxy-(14S,15R)-epoxy-(5Z,8Z,10E)-eicosatrienoate. It carries out the reaction (14R,15S)-epoxy-(5Z,8Z,11Z)-eicosatrienoate + O2 = (5S)-hydroperoxy-(14R,15S)-epoxy-(6E,8Z,11Z)-eicosatrienoate. The catalysed reaction is (14R,15S)-epoxy-(5Z,8Z,11Z)-eicosatrienoate + O2 = (12S)-hydroperoxy-(14R,15S)-epoxy-(5Z,8Z,10E)-eicosatrienoate. The enzyme catalyses (15R)-hydroperoxy-(5Z,8Z,11Z,13E)-eicosatetraenoate = 15-oxo-(5Z,8Z,11Z,13E)-eicosatetraenoate + H2O. It catalyses the reaction (15S)-hydroperoxy-(5Z,8Z,11Z,13E)-eicosatetraenoate = (14S,15S)-epoxy-(5Z,8Z,10E,12E)-eicosatetraenoate + H2O. It carries out the reaction (4Z,7Z,10Z,13Z,16Z)-docosapentaenoate + O2 = 14-hydroperoxy-(4Z,7Z,10Z,12E,16Z)-docosapentaenoate. The catalysed reaction is (7Z,10Z,13Z,16Z,19Z)-docosapentaenoate + O2 = 14-hydroperoxy-(7Z,10Z,12E,16Z,19Z)-docosapentaenoate. The enzyme catalyses (4Z,7Z,10Z,13Z,16Z,19Z)-docosahexaenoate + O2 = (14S)-hydroperoxy-(4Z,7Z,10Z,12E,16Z,19Z)-docosahexaenoate. It catalyses the reaction (4Z,7Z,10Z,13Z,16Z,19Z)-docosahexaenoate + O2 = (17S)-hydroperoxy-(4Z,7Z,10Z,13Z,15E,19Z)-docosahexaenoate. It carries out the reaction (7S)-hydroperoxy-(4Z,8E,10Z,13Z,16Z,19Z)-docosahexaenoate + O2 = (7S,14S)-dihydroperoxy-(4Z,8E,10Z,12E,16Z,19Z)-docosahexaenoate. The catalysed reaction is (7S)-hydroperoxy-(4Z,8E,10Z,13Z,16Z,19Z)-docosahexaenoate + O2 = (7S,17S)-dihydroperoxy-(4Z,8E,10Z,13Z,15E,19Z)-docosahexaenoate. The enzyme catalyses (4Z,7Z,10Z,13Z,16Z,19Z)-docosahexaenoate + O2 = (11S)-hydroperoxy-(4Z,7Z,9E,13Z,16Z,19Z)-docosahexaenoate. It catalyses the reaction N-(5Z,8Z,11Z,14Z)-eicosatetraenoyl-taurine + O2 = N-(12S)-hydroperoxy-(5Z,8Z,10E,14Z)-eicosatetraenoyl-taurine. It carries out the reaction N-(5Z,8Z,11Z,14Z)-eicosatetraenoyl-gamma-aminobutanoate + O2 = N-(12S)-hydroperoxy-(5Z,8Z,10E,14Z)-eicosatetraenoyl-gamma-aminobutanoate. The catalysed reaction is N-(5Z,8Z,11Z,14Z)-eicosatetraenoyl-glycine + O2 = N-(12S)-hydroperoxy-(5Z,8Z,10E,14Z)-eicosatetraenoyl-glycine. The enzyme catalyses N-(5Z,8Z,11Z,14Z)-eicosatetraenoyl-L-alanine + O2 = N-(12S)-hydroperoxy-(5Z,8Z,10E,14Z)-eicosatetraenoyl-alanine. It catalyses the reaction N-(5Z,8Z,11Z,14Z)-eicosatetraenoyl-taurine + O2 = N-(15S)-hydroperoxy-(5Z,8Z,11Z,13E)-eicosatetraenoyl-taurine. It carries out the reaction N-(5Z,8Z,11Z,14Z)-eicosatetraenoyl-gamma-aminobutanoate + O2 = N-(15S)-hydroperoxy-(5Z,8Z,11Z,13E)-eicosatetraenoyl-gamma-aminobutanoate. The catalysed reaction is N-(5Z,8Z,11Z,14Z)-eicosatetraenoyl-glycine + O2 = N-(15S)-hydroperoxy-(5Z,8Z,11Z,13E)-eicosatetraenoyl-glycine. The enzyme catalyses N-(5Z,8Z,11Z,14Z)-eicosatetraenoyl-L-alanine + O2 = N-(15S)-hydroperoxy-(5Z,8Z,11Z,13E)-eicosatetraenoyl-alanine. The protein operates within lipid metabolism; hydroperoxy eicosatetraenoic acid biosynthesis. Its function is as follows. Non-heme iron-containing dioxygenase that catalyzes the stereo-specific peroxidation of free and esterified polyunsaturated fatty acids generating a spectrum of bioactive lipid mediators. It inserts peroxyl groups at C12 or C15 of arachidonate ((5Z,8Z,11Z,14Z)-eicosatetraenoate) producing both 12-hydroperoxyeicosatetraenoate/12-HPETE and 15-hydroperoxyeicosatetraenoate/15-HPETE. It may then act on 12-HPETE to produce hepoxilins, which may show pro-inflammatory properties. Can also peroxidize linoleate ((9Z,12Z)-octadecadienoate) to 13-hydroperoxyoctadecadienoate. May participate in the sequential oxidations of DHA ((4Z,7Z,10Z,13Z,16Z,19Z)-docosahexaenoate) to generate specialized pro-resolving mediators (SPMs)like resolvin D5 ((7S,17S)-diHPDHA) and (7S,14S)-diHPDHA, that actively down-regulate the immune response and have anti-aggregation properties with platelets. Can convert epoxy fatty acids to hydroperoxy-epoxides derivatives followed by an intramolecular nucleophilic substitution leading to the formation of monocyclic endoperoxides. Plays an important role during the maintenance of self-tolerance by peroxidizing membrane-bound phosphatidylethanolamine which can then signal the sorting process for clearance of apoptotic cells during inflammation and prevent an autoimmune response. In addition to its role in the immune and inflammatory responses, this enzyme may play a role in epithelial wound healing in the cornea through production of lipoxin A4 (LXA(4)) and docosahexaenoic acid-derived neuroprotectin D1 (NPD1; 10R,17S-HDHA), both lipid autacoids exhibit anti-inflammatory and neuroprotective properties. Furthermore, it may regulate actin polymerization which is crucial for several biological processes such as the phagocytosis of apoptotic cells. It is also implicated in the generation of endogenous ligands for peroxisome proliferator activated receptor (PPAR-gamma), hence modulating macrophage development and function. It may also exert a negative effect on skeletal development by regulating bone mass through this pathway. As well as participates in ER stress and downstream inflammation in adipocytes, pancreatic islets, and liver. Finally, it is also involved in the cellular response to IL13/interleukin-13. This Rattus norvegicus (Rat) protein is Polyunsaturated fatty acid lipoxygenase ALOX15.